The sequence spans 366 residues: Aminomethyltransferase (366 aa).

This sequence belongs to the GcvT family. As to quaternary structure, the glycine cleavage system is composed of four proteins: P, T, L and H.

It carries out the reaction N(6)-[(R)-S(8)-aminomethyldihydrolipoyl]-L-lysyl-[protein] + (6S)-5,6,7,8-tetrahydrofolate = N(6)-[(R)-dihydrolipoyl]-L-lysyl-[protein] + (6R)-5,10-methylene-5,6,7,8-tetrahydrofolate + NH4(+). In terms of biological role, the glycine cleavage system catalyzes the degradation of glycine. This is Aminomethyltransferase from Moorella thermoacetica (strain ATCC 39073 / JCM 9320).